We begin with the raw amino-acid sequence, 212 residues long: uncharacterized protein (212 aa).

The interval 97–151 (SDASEAKNDDRRSDGRFALYSVSDTPETTTASRSADRSTNPKTAKHPKSAAKPTV) is disordered. Positions 100–111 (SEAKNDDRRSDG) are enriched in basic and acidic residues.

This is an uncharacterized protein from Mycobacterium tuberculosis (strain CDC 1551 / Oshkosh).